The sequence spans 130 residues: Small ribosomal subunit protein uS11 (130 aa).

The protein belongs to the universal ribosomal protein uS11 family. As to quaternary structure, part of the 30S ribosomal subunit. Interacts with proteins S7 and S18. Binds to IF-3.

Functionally, located on the platform of the 30S subunit, it bridges several disparate RNA helices of the 16S rRNA. Forms part of the Shine-Dalgarno cleft in the 70S ribosome. The protein is Small ribosomal subunit protein uS11 of Prochlorococcus marinus (strain MIT 9303).